A 494-amino-acid polypeptide reads, in one-letter code: Transcriptional regulator calD (494 aa).

It localises to the nucleus. Transcription co-regulator that might be involved in the regulation of the expression of the gene cluster that mediates the biosynthesis of calbistrins and related compounds such as decumbenones. Calbistrin A is a secondary metabolite with an interesting structure that was recently found to have bioactivity against leukemia cells. It consists of two polyketides linked by an ester bond: a bicyclic decalin containing polyketide and a linear 12 carbon dioic acid structure. The protein is Transcriptional regulator calD of Penicillium decumbens.